Reading from the N-terminus, the 351-residue chain is Ion-translocating oxidoreductase complex subunit D (351 aa).

A run of 4 helical transmembrane segments spans residues 18-38, 42-62, 87-107, and 121-141; these read IMLLVILACIPGIIAQTYFFG, LIQVALAIMTAVLAEGAVLHL, LPPLAPWWMIVLGTAFAIIIA, and PAMVGYVVLLISFPVQMTSWL. Threonine 185 bears the FMN phosphoryl threonine mark. A run of 5 helical transmembrane segments spans residues 212 to 232, 241 to 261, 264 to 284, 298 to 318, and 320 to 340; these read LAGIGWQWINLGFLAGGLLLL, IPVSFLLALAGCAAISWMIAP, FAPPMLHLFSGATMLGAFFIA, LIFGALIGILVWLIRVYGGYP, and GVAFAVLLANICVPLIDHYTQ.

This sequence belongs to the NqrB/RnfD family. The complex is composed of six subunits: RnfA, RnfB, RnfC, RnfD, RnfE and RnfG. Requires FMN as cofactor.

Its subcellular location is the cell inner membrane. In terms of biological role, part of a membrane-bound complex that couples electron transfer with translocation of ions across the membrane. The polypeptide is Ion-translocating oxidoreductase complex subunit D (Yersinia enterocolitica serotype O:8 / biotype 1B (strain NCTC 13174 / 8081)).